Reading from the N-terminus, the 810-residue chain is Leucine--tRNA ligase (810 aa).

Residues 41–52 carry the 'HIGH' region motif; it reads PYPSGQGLHVGH. The 'KMSKS' region motif lies at 582–586; it reads KMSKS. An ATP-binding site is contributed by Lys-585.

It belongs to the class-I aminoacyl-tRNA synthetase family.

The protein localises to the cytoplasm. The catalysed reaction is tRNA(Leu) + L-leucine + ATP = L-leucyl-tRNA(Leu) + AMP + diphosphate. In Oenococcus oeni (strain ATCC BAA-331 / PSU-1), this protein is Leucine--tRNA ligase.